Here is a 174-residue protein sequence, read N- to C-terminus: ATP synthase subunit delta (174 aa).

The protein belongs to the ATPase delta chain family. F-type ATPases have 2 components, F(1) - the catalytic core - and F(0) - the membrane proton channel. F(1) has five subunits: alpha(3), beta(3), gamma(1), delta(1), epsilon(1). F(0) has three main subunits: a(1), b(2) and c(10-14). The alpha and beta chains form an alternating ring which encloses part of the gamma chain. F(1) is attached to F(0) by a central stalk formed by the gamma and epsilon chains, while a peripheral stalk is formed by the delta and b chains.

The protein resides in the cell inner membrane. Its function is as follows. F(1)F(0) ATP synthase produces ATP from ADP in the presence of a proton or sodium gradient. F-type ATPases consist of two structural domains, F(1) containing the extramembraneous catalytic core and F(0) containing the membrane proton channel, linked together by a central stalk and a peripheral stalk. During catalysis, ATP synthesis in the catalytic domain of F(1) is coupled via a rotary mechanism of the central stalk subunits to proton translocation. This protein is part of the stalk that links CF(0) to CF(1). It either transmits conformational changes from CF(0) to CF(1) or is implicated in proton conduction. This Helicobacter hepaticus (strain ATCC 51449 / 3B1) protein is ATP synthase subunit delta.